Consider the following 510-residue polypeptide: NAD(P)H-quinone oxidoreductase subunit 2 B, chloroplastic (510 aa).

12 consecutive transmembrane segments (helical) span residues 24–44 (LLLF…GLIL), 59–79 (WFYF…LFRW), 99–119 (IFQF…VEYI), 124–144 (MAIT…MFLC), 149–169 (LITI…LSGY), 183–203 (YLLM…WLYG), 229–249 (ISIA…PAPF), 295–315 (WHLL…LLAI), 323–343 (MLAY…IVGD), 354–374 (YMLF…LFGL), 395–415 (ALSL…AGFF), and 418–438 (LYLF…IGLL).

This sequence belongs to the complex I subunit 2 family. As to quaternary structure, NDH is composed of at least 16 different subunits, 5 of which are encoded in the nucleus.

It is found in the plastid. The protein localises to the chloroplast thylakoid membrane. The catalysed reaction is a plastoquinone + NADH + (n+1) H(+)(in) = a plastoquinol + NAD(+) + n H(+)(out). It carries out the reaction a plastoquinone + NADPH + (n+1) H(+)(in) = a plastoquinol + NADP(+) + n H(+)(out). NDH shuttles electrons from NAD(P)H:plastoquinone, via FMN and iron-sulfur (Fe-S) centers, to quinones in the photosynthetic chain and possibly in a chloroplast respiratory chain. The immediate electron acceptor for the enzyme in this species is believed to be plastoquinone. Couples the redox reaction to proton translocation, and thus conserves the redox energy in a proton gradient. The sequence is that of NAD(P)H-quinone oxidoreductase subunit 2 B, chloroplastic from Lolium perenne (Perennial ryegrass).